The sequence spans 265 residues: 4-hydroxy-tetrahydrodipicolinate reductase (265 aa).

Position 9–14 (9–14) interacts with NAD(+); that stretch reads GARGKM. NADP(+) is bound at residue K37. NAD(+)-binding positions include 99–101 and 125–128; these read GTT and APNF. The active-site Proton donor/acceptor is the H155. H156 serves as a coordination point for (S)-2,3,4,5-tetrahydrodipicolinate. Catalysis depends on K159, which acts as the Proton donor. 165–166 is a binding site for (S)-2,3,4,5-tetrahydrodipicolinate; that stretch reads GT.

The protein belongs to the DapB family.

It localises to the cytoplasm. The enzyme catalyses (S)-2,3,4,5-tetrahydrodipicolinate + NAD(+) + H2O = (2S,4S)-4-hydroxy-2,3,4,5-tetrahydrodipicolinate + NADH + H(+). The catalysed reaction is (S)-2,3,4,5-tetrahydrodipicolinate + NADP(+) + H2O = (2S,4S)-4-hydroxy-2,3,4,5-tetrahydrodipicolinate + NADPH + H(+). It participates in amino-acid biosynthesis; L-lysine biosynthesis via DAP pathway; (S)-tetrahydrodipicolinate from L-aspartate: step 4/4. Functionally, catalyzes the conversion of 4-hydroxy-tetrahydrodipicolinate (HTPA) to tetrahydrodipicolinate. The polypeptide is 4-hydroxy-tetrahydrodipicolinate reductase (Lysinibacillus sphaericus (strain C3-41)).